The chain runs to 335 residues: Fructose-1,6-bisphosphatase class 1 (335 aa).

Mg(2+) contacts are provided by Glu91, Asp113, Leu115, and Asp116. Residues 116–119 (DGSS), Asn208, and Lys274 each bind substrate. Residue Glu280 coordinates Mg(2+).

Belongs to the FBPase class 1 family. In terms of assembly, homotetramer. Requires Mg(2+) as cofactor.

The protein localises to the cytoplasm. It catalyses the reaction beta-D-fructose 1,6-bisphosphate + H2O = beta-D-fructose 6-phosphate + phosphate. It participates in carbohydrate biosynthesis; gluconeogenesis. The polypeptide is Fructose-1,6-bisphosphatase class 1 (Chromobacterium violaceum (strain ATCC 12472 / DSM 30191 / JCM 1249 / CCUG 213 / NBRC 12614 / NCIMB 9131 / NCTC 9757 / MK)).